Reading from the N-terminus, the 556-residue chain is Glutamine--tRNA ligase (556 aa).

The 'HIGH' region motif lies at 34–44; that stretch reads PEPNGYLHIGH. Residues 35-37 and 41-47 each bind ATP; these read EPN and HIGHAKS. 2 residues coordinate L-glutamine: Asp67 and Tyr212. ATP is bound by residues Thr231, 261–262, and 269–271; these read RL and MSK. The 'KMSKS' region signature appears at 268–272; the sequence is VMSKR.

It belongs to the class-I aminoacyl-tRNA synthetase family. As to quaternary structure, monomer.

The protein resides in the cytoplasm. The catalysed reaction is tRNA(Gln) + L-glutamine + ATP = L-glutaminyl-tRNA(Gln) + AMP + diphosphate. This chain is Glutamine--tRNA ligase, found in Vibrio cholerae serotype O1 (strain ATCC 39315 / El Tor Inaba N16961).